Consider the following 310-residue polypeptide: Protoheme IX farnesyltransferase (310 aa).

Helical transmembrane passes span 26 to 46, 47 to 67, 95 to 115, 118 to 138, 147 to 167, 174 to 194, 220 to 240, 243 to 263, and 281 to 301; these read VMSL…ATVH, PMIA…SGAL, GEAL…LGLA, LFAA…YSMW, IVIG…VATG, LFMF…LALF, VLAY…TGIG, LYLV…VRIW, and FFRF…AEAA.

It belongs to the UbiA prenyltransferase family. Protoheme IX farnesyltransferase subfamily. In terms of assembly, interacts with CtaA.

The protein resides in the cell inner membrane. It catalyses the reaction heme b + (2E,6E)-farnesyl diphosphate + H2O = Fe(II)-heme o + diphosphate. It functions in the pathway porphyrin-containing compound metabolism; heme O biosynthesis; heme O from protoheme: step 1/1. Its function is as follows. Converts heme B (protoheme IX) to heme O by substitution of the vinyl group on carbon 2 of heme B porphyrin ring with a hydroxyethyl farnesyl side group. This is Protoheme IX farnesyltransferase from Cereibacter sphaeroides (strain ATCC 17025 / ATH 2.4.3) (Rhodobacter sphaeroides).